Here is a 355-residue protein sequence, read N- to C-terminus: Myosin-binding protein H-like (355 aa).

Composition is skewed to polar residues over residues 1–16 (META…SQRQ) and 31–41 (TSHQQEAGSPS). Residues 1–41 (METATTLEIASCSQRQVEAAADPADAKGPRTSHQQEAGSPS) are disordered. S39 carries the post-translational modification Phosphoserine. The region spanning 46–140 (PSIEEHPKIW…GGLQATATIN (95 aa)) is the Ig-like C2-type 1 domain. The Fibronectin type-III domain maps to 149-244 (PPQSIKLVDV…TADLAHIQKA (96 aa)). One can recognise an Ig-like C2-type 2 domain in the interval 262 to 346 (PKFTQPLADC…INALGEASVD (85 aa)). The cysteines at positions 283 and 334 are disulfide-linked. R322 carries the omega-N-methylarginine modification.

This sequence belongs to the immunoglobulin superfamily. MyBP family. In terms of tissue distribution, expressed in the atria as well as in discrete puncta throughout the right ventricular wall and septum.

The protein localises to the cytoplasm. It is found in the myofibril. Its subcellular location is the sarcomere. Its function is as follows. Myosin-binding protein which plays a role in cardiac function. Seems to regulate conduction in the atria and ventricular conduction systems. This chain is Myosin-binding protein H-like, found in Mus musculus (Mouse).